The sequence spans 210 residues: Proteasome subunit beta 2 (210 aa).

A propeptide spans 1–12 (removed in mature form; by autocatalysis); that stretch reads MSNNVEEKILHG. The active-site Nucleophile is threonine 13.

Belongs to the peptidase T1B family. As to quaternary structure, the 20S proteasome core is composed of 14 alpha and 14 beta subunits that assemble into four stacked heptameric rings, resulting in a barrel-shaped structure. The two inner rings, each composed of seven catalytic beta subunits, are sandwiched by two outer rings, each composed of seven alpha subunits. The catalytic chamber with the active sites is on the inside of the barrel. Has a gated structure, the ends of the cylinder being occluded by the N-termini of the alpha-subunits. Is capped at one or both ends by the proteasome regulatory ATPase, PAN.

It is found in the cytoplasm. The catalysed reaction is Cleavage of peptide bonds with very broad specificity.. The formation of the proteasomal ATPase PAN-20S proteasome complex, via the docking of the C-termini of PAN into the intersubunit pockets in the alpha-rings, triggers opening of the gate for substrate entry. Interconversion between the open-gate and close-gate conformations leads to a dynamic regulation of the 20S proteasome proteolysis activity. Its function is as follows. Component of the proteasome core, a large protease complex with broad specificity involved in protein degradation. This chain is Proteasome subunit beta 2, found in Cenarchaeum symbiosum (strain A).